Here is a 166-residue protein sequence, read N- to C-terminus: PTS system glucose-specific EIIA component (166 aa).

The PTS EIIA type-1 domain occupies 34–138 (DPVFAQKMMG…SVISPIIITN (105 aa)). Zn(2+) is bound by residues histidine 71 and histidine 86. The active-site Tele-phosphohistidine intermediate; for EIIA activity is the histidine 86. Histidine 86 bears the Phosphohistidine; by HPr mark.

Heterodimer with glycerol kinase (glpk). The cofactor is Zn(2+).

The protein resides in the cytoplasm. In terms of biological role, the phosphoenolpyruvate-dependent sugar phosphotransferase system (sugar PTS), a major carbohydrate active transport system, catalyzes the phosphorylation of incoming sugar substrates concomitantly with their translocation across the cell membrane. The enzyme II complex composed of PtsG and Crr is involved in glucose transport. The protein is PTS system glucose-specific EIIA component (crr) of Staphylococcus aureus (strain COL).